The following is a 223-amino-acid chain: 23 kDa piroplasm membrane protein (223 aa).

A signal peptide spans 1–19; the sequence is MHKFTKVFFVAILVHTLKS. The Extracellular segment spans residues 20–197; the sequence is GLVFTPVSGT…EEEKSDKKKY (178 aa). Asn69 carries N-linked (GlcNAc...) asparagine glycosylation. A helical transmembrane segment spans residues 198 to 218; the sequence is VLMVVVVVVFVVVASLVVFLV. Topologically, residues 219 to 223 are cytoplasmic; sequence KFCLK.

The protein localises to the membrane. This Theileria buffeli protein is 23 kDa piroplasm membrane protein.